The chain runs to 497 residues: MKLALVSAEAYPFSKTGGLGDVVGSLFKEFIKAGIDVTLFLPFYKITRDNFSNSVVNAEIVYGAPIGLNTLFGAVRVAKVSVDSDDNLIIEPSKKGNLFFIEHNNFFDRNELYGTNHGEYLDNAERFVFFSRAVLEICKIMNLNFDVIHCHDWHTALIPLYLKTLYRECSCFEKTKTVLTVHNLGYQGIFPREKLELTGFGQEMFHIDGLEFYGMVNFLKGGLFNADIITTVSPTYAKEILTPDYGAGLDGVLRKRKENLVGIINGIDYKIWNPEEDPFIAKKYGLQNINDKQKNKEDLIALAGINSSLQDPIIAFIGRMVYQKGIDIVVDAMPNLIKNGISFIFEGTGESYYEHKIRELQNSYPSKVFAFIGFDEALAHKIYAGADSLLVPSRYEPCGLSQLIAMRYGTIPICRKTGGLSDTVEDKVTGFLFSEYSSSALTHAISRFIEIYNNKQKFLEMIREAMKRDFSWSNSSKKYIELYRGLIGERERKTGTI.

K15 serves as a coordination point for ADP-alpha-D-glucose.

This sequence belongs to the glycosyltransferase 1 family. Bacterial/plant glycogen synthase subfamily.

It catalyses the reaction [(1-&gt;4)-alpha-D-glucosyl](n) + ADP-alpha-D-glucose = [(1-&gt;4)-alpha-D-glucosyl](n+1) + ADP + H(+). Its pathway is glycan biosynthesis; glycogen biosynthesis. Its function is as follows. Synthesizes alpha-1,4-glucan chains using ADP-glucose. The chain is Glycogen synthase from Thermodesulfovibrio yellowstonii (strain ATCC 51303 / DSM 11347 / YP87).